Reading from the N-terminus, the 385-residue chain is Cell division protein FtsZ (385 aa).

GTP-binding positions include 20 to 24 (GGGGN), 107 to 109 (GTG), glutamate 138, arginine 142, and asparagine 186.

The protein belongs to the FtsZ family. As to quaternary structure, homodimer. Polymerizes to form a dynamic ring structure in a strictly GTP-dependent manner. Interacts directly with several other division proteins.

Its subcellular location is the cytoplasm. Essential cell division protein that forms a contractile ring structure (Z ring) at the future cell division site. The regulation of the ring assembly controls the timing and the location of cell division. One of the functions of the FtsZ ring is to recruit other cell division proteins to the septum to produce a new cell wall between the dividing cells. Binds GTP and shows GTPase activity. This is Cell division protein FtsZ from Buchnera aphidicola subsp. Baizongia pistaciae (strain Bp).